The chain runs to 447 residues: Probable alpha-galactosidase B (447 aa).

An N-terminal signal peptide occupies residues 1–22 (MTTFLSLTTAAAVLTLARGSNA). 2 disulfides stabilise this stretch: cysteine 45-cysteine 77 and cysteine 127-cysteine 157. The Nucleophile role is filled by aspartate 155. N-linked (GlcNAc...) asparagine glycosylation is found at asparagine 162 and asparagine 180. 225-229 (NWGQA) serves as a coordination point for substrate. Residue asparagine 236 is glycosylated (N-linked (GlcNAc...) asparagine). Aspartate 247 acts as the Proton donor in catalysis. Asparagine 286 carries an N-linked (GlcNAc...) asparagine glycan.

Belongs to the glycosyl hydrolase 27 family.

It localises to the secreted. It carries out the reaction Hydrolysis of terminal, non-reducing alpha-D-galactose residues in alpha-D-galactosides, including galactose oligosaccharides, galactomannans and galactolipids.. Its function is as follows. Hydrolyzes a variety of simple alpha-D-galactoside as well as more complex molecules such as oligosaccharides and polysaccharides. The polypeptide is Probable alpha-galactosidase B (aglB) (Neosartorya fischeri (strain ATCC 1020 / DSM 3700 / CBS 544.65 / FGSC A1164 / JCM 1740 / NRRL 181 / WB 181) (Aspergillus fischerianus)).